The chain runs to 292 residues: Phosphatidylserine decarboxylase proenzyme (292 aa).

Active-site charge relay system; for autoendoproteolytic cleavage activity residues include aspartate 98, histidine 153, and serine 254. Catalysis depends on serine 254, which acts as the Schiff-base intermediate with substrate; via pyruvic acid; for decarboxylase activity. At serine 254 the chain carries Pyruvic acid (Ser); by autocatalysis.

It belongs to the phosphatidylserine decarboxylase family. PSD-B subfamily. Prokaryotic type I sub-subfamily. Heterodimer of a large membrane-associated beta subunit and a small pyruvoyl-containing alpha subunit. Pyruvate serves as cofactor. Is synthesized initially as an inactive proenzyme. Formation of the active enzyme involves a self-maturation process in which the active site pyruvoyl group is generated from an internal serine residue via an autocatalytic post-translational modification. Two non-identical subunits are generated from the proenzyme in this reaction, and the pyruvate is formed at the N-terminus of the alpha chain, which is derived from the carboxyl end of the proenzyme. The autoendoproteolytic cleavage occurs by a canonical serine protease mechanism, in which the side chain hydroxyl group of the serine supplies its oxygen atom to form the C-terminus of the beta chain, while the remainder of the serine residue undergoes an oxidative deamination to produce ammonia and the pyruvoyl prosthetic group on the alpha chain. During this reaction, the Ser that is part of the protease active site of the proenzyme becomes the pyruvoyl prosthetic group, which constitutes an essential element of the active site of the mature decarboxylase.

It localises to the cell membrane. It carries out the reaction a 1,2-diacyl-sn-glycero-3-phospho-L-serine + H(+) = a 1,2-diacyl-sn-glycero-3-phosphoethanolamine + CO2. The protein operates within phospholipid metabolism; phosphatidylethanolamine biosynthesis; phosphatidylethanolamine from CDP-diacylglycerol: step 2/2. In terms of biological role, catalyzes the formation of phosphatidylethanolamine (PtdEtn) from phosphatidylserine (PtdSer). This chain is Phosphatidylserine decarboxylase proenzyme, found in Halorhodospira halophila (strain DSM 244 / SL1) (Ectothiorhodospira halophila (strain DSM 244 / SL1)).